We begin with the raw amino-acid sequence, 445 residues long: Chromosomal replication initiator protein DnaA (445 aa).

The segment at Met1–Ile69 is domain I, interacts with DnaA modulators. The domain II stretch occupies residues Ile69–Thr108. Positions Asn109–Ala325 are domain III, AAA+ region. ATP contacts are provided by Gly153, Gly155, Lys156, and Thr157. The domain IV, binds dsDNA stretch occupies residues Ser326–Ser445.

It belongs to the DnaA family. In terms of assembly, oligomerizes as a right-handed, spiral filament on DNA at oriC.

The protein resides in the cytoplasm. Its function is as follows. Plays an essential role in the initiation and regulation of chromosomal replication. ATP-DnaA binds to the origin of replication (oriC) to initiate formation of the DNA replication initiation complex once per cell cycle. Binds the DnaA box (a 9 base pair repeat at the origin) and separates the double-stranded (ds)DNA. Forms a right-handed helical filament on oriC DNA; dsDNA binds to the exterior of the filament while single-stranded (ss)DNA is stabiized in the filament's interior. The ATP-DnaA-oriC complex binds and stabilizes one strand of the AT-rich DNA unwinding element (DUE), permitting loading of DNA polymerase. After initiation quickly degrades to an ADP-DnaA complex that is not apt for DNA replication. Binds acidic phospholipids. This chain is Chromosomal replication initiator protein DnaA, found in Geotalea daltonii (strain DSM 22248 / JCM 15807 / FRC-32) (Geobacter daltonii).